A 283-amino-acid polypeptide reads, in one-letter code: Nucleotide-binding protein IL0393 (283 aa).

8-15 serves as a coordination point for ATP; sequence GRSGSGKT. 56-59 is a GTP binding site; that stretch reads DVRN.

This sequence belongs to the RapZ-like family.

Displays ATPase and GTPase activities. The polypeptide is Nucleotide-binding protein IL0393 (Idiomarina loihiensis (strain ATCC BAA-735 / DSM 15497 / L2-TR)).